Reading from the N-terminus, the 392-residue chain is MTQTANAAKKTTSTKASAAKEAKVKVTAEEKAVTEVKKPAAKKKSALAFPFTAIVGQEEMKLSLILNIIDPRIGGVLVMGHRGTGKSTTVRALAEVLPLIPRVKGDIYNRTVEQYIEMEAAGKGAPAIKPEDVETELIPVPVVDLPLGATEDRVCGTIDIEKALTSGVKAFEPGLLAQSNRGFLYIDEVNLLDDHLVDVLLDVAASGKNVVEREGISIRHPARFVLVGSGNPEEGELRPQLLDRFGLHARITTINDVAKRVQIVKLRREFDEDPEAFMKKVSREQQKLRKKIVAAQQLLPQVTMDDAVLTDIAKLCMNLGIDGHRGELTITRTAHAYAAWEGDKKVTMKHVREIAGLCLRHRLRKDPLETVDAGEKIDRELAKVLGEAEAAA.

Low complexity predominate over residues 1-17; that stretch reads MTQTANAAKKTTSTKAS. A disordered region spans residues 1-21; sequence MTQTANAAKKTTSTKASAAKE. 80–87 contacts ATP; it reads GHRGTGKS.

It belongs to the Mg-chelatase subunits D/I family.

It catalyses the reaction protoporphyrin IX + Mg(2+) + ATP + H2O = Mg-protoporphyrin IX + ADP + phosphate + 3 H(+). It functions in the pathway porphyrin-containing compound metabolism; bacteriochlorophyll biosynthesis. Involved in bacteriochlorophyll biosynthesis; introduces a magnesium ion into protoporphyrin IX to yield Mg-protoporphyrin IX. The chain is Magnesium-chelatase 38 kDa subunit (bchI) from Chlorobaculum tepidum (strain ATCC 49652 / DSM 12025 / NBRC 103806 / TLS) (Chlorobium tepidum).